The primary structure comprises 106 residues: Large ribosomal subunit protein eL42 (106 aa).

Positions 36 to 56 are disordered; it reads FAQGKRRYDRKQSGYGGQTKP.

It belongs to the eukaryotic ribosomal protein eL42 family.

This chain is Large ribosomal subunit protein eL42 (RPL44), found in Phaffia rhodozyma (Yeast).